The chain runs to 501 residues: Probable cysteine desulfurase, mitochondrial (501 aa).

Residues 172–173 (AT), Asn-252, Gln-280, and 300–302 (SAH) each bind pyridoxal 5'-phosphate. Lys-303 bears the N6-(pyridoxal phosphate)lysine mark. Pyridoxal 5'-phosphate is bound at residue Thr-340. The Cysteine persulfide intermediate role is filled by Cys-425. Cys-425 serves as a coordination point for [2Fe-2S] cluster.

The protein belongs to the class-V pyridoxal-phosphate-dependent aminotransferase family. NifS/IscS subfamily. The cofactor is pyridoxal 5'-phosphate.

The protein resides in the mitochondrion. The enzyme catalyses (sulfur carrier)-H + L-cysteine = (sulfur carrier)-SH + L-alanine. Catalyzes the removal of elemental sulfur from cysteine to produce alanine. It supplies the inorganic sulfur for iron-sulfur (Fe-S) clusters. Plays a role in both tRNA-processing and mitochondrial metabolism. Involved in the 2-thio-modification of both 5-carboxymethylaminomethyl-2-thiouridine in mitochondrial tRNAs and 5-methoxycarbonylmethyl-2-thiouridine (mcm5s2U) in cytoplasmic tRNAs. This chain is Probable cysteine desulfurase, mitochondrial, found in Schizosaccharomyces pombe (strain 972 / ATCC 24843) (Fission yeast).